We begin with the raw amino-acid sequence, 366 residues long: Putative zinc metalloprotease slr1821 (366 aa).

His-20 provides a ligand contact to Zn(2+). The active site involves Glu-21. His-24 is a Zn(2+) binding site. A run of 3 helical transmembrane segments spans residues 95–115 (AIVISAGVIANLVFAYFLLIG), 293–313 (AVINILPLPALDGGQLVFLLI), and 325–345 (FQMGVMQTGLVLLLSLGVFLI). Residues 106-188 (LVFAYFLLIG…VPITVEVQRG (83 aa)) form the PDZ domain.

Belongs to the peptidase M50B family. Requires Zn(2+) as cofactor.

The protein localises to the cell inner membrane. The chain is Putative zinc metalloprotease slr1821 from Synechocystis sp. (strain ATCC 27184 / PCC 6803 / Kazusa).